Consider the following 1728-residue polypeptide: U3 small nucleolar RNA-associated protein 10 (1728 aa).

HEAT repeat units follow at residues 540 to 578, 881 to 926, 986 to 1024, 1191 to 1229, 1235 to 1274, 1622 to 1662, and 1683 to 1721; these read DKDF…LVKE, PANH…MMPA, FMGS…AYEH, LLSI…SEST, REAL…KYGK, ADAT…GQAA, and LQAL…KLGE.

The protein belongs to the HEATR1/UTP10 family. Component of the ribosomal small subunit (SSU) processome.

The protein localises to the nucleus. It is found in the nucleolus. In terms of biological role, involved in nucleolar processing of pre-18S ribosomal RNA. Involved in ribosome biosynthesis. The sequence is that of U3 small nucleolar RNA-associated protein 10 from Chaetomium globosum (strain ATCC 6205 / CBS 148.51 / DSM 1962 / NBRC 6347 / NRRL 1970) (Soil fungus).